We begin with the raw amino-acid sequence, 332 residues long: Ferredoxin--NADP reductase 1 (332 aa).

Residues Asp-35, Lys-43, Phe-48, Val-88, Phe-123, Asp-284, and Thr-325 each contribute to the FAD site.

Belongs to the ferredoxin--NADP reductase type 2 family. In terms of assembly, homodimer. It depends on FAD as a cofactor.

It catalyses the reaction 2 reduced [2Fe-2S]-[ferredoxin] + NADP(+) + H(+) = 2 oxidized [2Fe-2S]-[ferredoxin] + NADPH. In Listeria monocytogenes serovar 1/2a (strain ATCC BAA-679 / EGD-e), this protein is Ferredoxin--NADP reductase 1.